The chain runs to 604 residues: Sulfite reductase [NADPH] flavoprotein alpha-component (604 aa).

The Flavodoxin-like domain occupies 65–203; that stretch reads VTILYGSQTG…AAGQWHADVL (139 aa). Residues 71-76, 118-121, and 154-163 each bind FMN; these read SQTGNG, STHG, and LGDSSYEFFC. The 218-residue stretch at 236 to 453 folds into the FAD-binding FR-type domain; the sequence is QNPYSAEVLV…VEPNKHFRLP (218 aa). Residues Thr-324, Leu-358, 392-395, 410-412, and 425-428 contribute to the FAD site; these read RLYS, TVA, and GGAS. NADP(+) is bound by residues 524–525, 530–534, and Asp-566; these read SR and KIYVQ. FAD is bound at residue Tyr-604.

It belongs to the NADPH-dependent sulphite reductase flavoprotein subunit CysJ family. In the N-terminal section; belongs to the flavodoxin family. The protein in the C-terminal section; belongs to the flavoprotein pyridine nucleotide cytochrome reductase family. In terms of assembly, alpha(8)-beta(8). The alpha component is a flavoprotein, the beta component is a hemoprotein. FAD serves as cofactor. FMN is required as a cofactor.

The catalysed reaction is hydrogen sulfide + 3 NADP(+) + 3 H2O = sulfite + 3 NADPH + 4 H(+). It functions in the pathway sulfur metabolism; hydrogen sulfide biosynthesis; hydrogen sulfide from sulfite (NADPH route): step 1/1. Its function is as follows. Component of the sulfite reductase complex that catalyzes the 6-electron reduction of sulfite to sulfide. This is one of several activities required for the biosynthesis of L-cysteine from sulfate. The flavoprotein component catalyzes the electron flow from NADPH -&gt; FAD -&gt; FMN to the hemoprotein component. In Shewanella sp. (strain MR-4), this protein is Sulfite reductase [NADPH] flavoprotein alpha-component.